Reading from the N-terminus, the 564-residue chain is E3 ubiquitin-protein ligase hrd-like protein 1 (564 aa).

A helical membrane pass occupies residues 17 to 37 (SYLALSVLVAIVASVTVFTTF). Asparagine 53 carries an N-linked (GlcNAc...) asparagine glycan. 7 helical membrane-spanning segments follow: residues 61–81 (YGLN…HYIL), 86–106 (LIWV…RLII), 123–143 (QAFF…IGPQ), 148–168 (VMPW…QFIT), 185–205 (KISF…FLIS), 215–235 (PAVL…YILF), and 272–292 (LSFA…IFFL). The segment at 335–373 (CVVCWELLGTSRRLPCSHQFHDWCLMWWLAQDSSCPTCR) adopts an RING-type; atypical zinc-finger fold. The region spanning 432-474 (QLQTMLEQVREMFPQMSVDIIMTDLRQSGSAQSTIENILEGRI) is the CUE domain.

The protein localises to the membrane. Functionally, proposed to have a role in neuroprotection. The polypeptide is E3 ubiquitin-protein ligase hrd-like protein 1 (hrdl-1) (Caenorhabditis elegans).